The sequence spans 342 residues: Ornithine carbamoyltransferase, catabolic (342 aa).

Carbamoyl phosphate is bound by residues 59-62 (STRT), Ser83, Arg110, and 137-140 (HPTQ). L-ornithine contacts are provided by residues Asn169, Asp235, and 239–240 (SL). Residues 276 to 277 (CL) and Arg328 contribute to the carbamoyl phosphate site.

The protein belongs to the aspartate/ornithine carbamoyltransferase superfamily. OTCase family. As to quaternary structure, dodecamer (tetramer of trimers).

The protein localises to the cytoplasm. The enzyme catalyses carbamoyl phosphate + L-ornithine = L-citrulline + phosphate + H(+). It functions in the pathway amino-acid degradation; L-arginine degradation via ADI pathway; carbamoyl phosphate from L-arginine: step 2/2. Functionally, nvolved in the catabolism of arginine. Catalyzes the phosphorolysis of citrulline, the reverse reaction of the biosynthetic one, yielding ornithine and carbamoyl phosphate which serve to generate ATP from ADP. The polypeptide is Ornithine carbamoyltransferase, catabolic (arcB) (Malacoplasma penetrans (strain HF-2) (Mycoplasma penetrans)).